We begin with the raw amino-acid sequence, 272 residues long: Phosphate import ATP-binding protein PstB (272 aa).

The ABC transporter domain maps to 18-257 (VSIQNATISY…FNDTDKIFNA (240 aa)). 50-57 (GPSGCGKS) contacts ATP.

Belongs to the ABC transporter superfamily. Phosphate importer (TC 3.A.1.7) family. As to quaternary structure, the complex is composed of two ATP-binding proteins (PstB), two transmembrane proteins (PstC and PstA) and a solute-binding protein (PstS).

Its subcellular location is the cell inner membrane. It carries out the reaction phosphate(out) + ATP + H2O = ADP + 2 phosphate(in) + H(+). Part of the ABC transporter complex PstSACB involved in phosphate import. Responsible for energy coupling to the transport system. This Synechococcus sp. (strain CC9311) protein is Phosphate import ATP-binding protein PstB.